The primary structure comprises 86 residues: Small ribosomal subunit protein bS20 (86 aa).

It belongs to the bacterial ribosomal protein bS20 family.

In terms of biological role, binds directly to 16S ribosomal RNA. In Aliarcobacter butzleri (strain RM4018) (Arcobacter butzleri), this protein is Small ribosomal subunit protein bS20.